The following is a 282-amino-acid chain: Ribosome biogenesis GTPase A (282 aa).

In terms of domain architecture, CP-type G spans 14-178; sequence RREVTEKLKL…LLDTPGILWP (165 aa). Residues 58 to 61, 86 to 87, 130 to 135, and G174 contribute to the GTP site; these read NKAD, NS, and NVGKST.

Belongs to the TRAFAC class YlqF/YawG GTPase family. MTG1 subfamily. In terms of assembly, interacts with ctc. Interacts with the immature 50S ribosome subunit. 2 molecules of rbgA bind to one 50S subunit.

Its subcellular location is the cytoplasm. Its function is as follows. Essential protein that is required for a late step of 50S ribosomal subunit assembly. Has GTPase activity that is stimulated by interaction with the immature 50S ribosome subunit. Binds to the 23S rRNA. Required for the association of ribosomal proteins rplP and rpmA with the large subunit. This Bacillus pumilus (strain SAFR-032) protein is Ribosome biogenesis GTPase A.